Reading from the N-terminus, the 441-residue chain is tRNA-2-methylthio-N(6)-dimethylallyladenosine synthase (441 aa).

Residues K5–Q120 form the MTTase N-terminal domain. [4Fe-4S] cluster-binding residues include C14, C50, C83, C158, C162, and C165. The Radical SAM core domain occupies E144–E374. One can recognise a TRAM domain in the interval A377 to V439.

It belongs to the methylthiotransferase family. MiaB subfamily. Monomer. [4Fe-4S] cluster is required as a cofactor.

The protein localises to the cytoplasm. The catalysed reaction is N(6)-dimethylallyladenosine(37) in tRNA + (sulfur carrier)-SH + AH2 + 2 S-adenosyl-L-methionine = 2-methylsulfanyl-N(6)-dimethylallyladenosine(37) in tRNA + (sulfur carrier)-H + 5'-deoxyadenosine + L-methionine + A + S-adenosyl-L-homocysteine + 2 H(+). Its function is as follows. Catalyzes the methylthiolation of N6-(dimethylallyl)adenosine (i(6)A), leading to the formation of 2-methylthio-N6-(dimethylallyl)adenosine (ms(2)i(6)A) at position 37 in tRNAs that read codons beginning with uridine. The sequence is that of tRNA-2-methylthio-N(6)-dimethylallyladenosine synthase from Geobacter metallireducens (strain ATCC 53774 / DSM 7210 / GS-15).